The following is a 181-amino-acid chain: Adenine phosphoribosyltransferase (181 aa).

The protein belongs to the purine/pyrimidine phosphoribosyltransferase family. As to quaternary structure, homodimer.

Its subcellular location is the cytoplasm. The catalysed reaction is AMP + diphosphate = 5-phospho-alpha-D-ribose 1-diphosphate + adenine. The protein operates within purine metabolism; AMP biosynthesis via salvage pathway; AMP from adenine: step 1/1. In terms of biological role, catalyzes a salvage reaction resulting in the formation of AMP, that is energically less costly than de novo synthesis. This is Adenine phosphoribosyltransferase from Shewanella amazonensis (strain ATCC BAA-1098 / SB2B).